The sequence spans 495 residues: UDP-glycosyltransferase 73C6 (495 aa).

UDP-alpha-D-glucose is bound by residues Ser296, 356-358 (SPQ), 373-381 (HCGWNSTLE), and 395-398 (FADQ). Residues 449 to 475 (SDDAKERRRRAKELGESAHKAVEEGGS) are disordered. The segment covering 450–471 (DDAKERRRRAKELGESAHKAVE) has biased composition (basic and acidic residues).

Belongs to the UDP-glycosyltransferase family. As to expression, expressed in leaves and flowers, and at a very low level in roots.

Functionally, acts as a UDP-glucose:flavonol-3-O-glycoside-7-O-glucosyltransferase. 6- and 7-hydroxyflavone, but not 3- or 5-hydroxyflavone are accepted as substrates. Possesses low quercetin 3-O-glucosyltransferase, 7-O-glucosyltransferase and 4'-O-glucosyltransferase activities in vitro. In Arabidopsis thaliana (Mouse-ear cress), this protein is UDP-glycosyltransferase 73C6 (UGT73C6).